The sequence spans 124 residues: Fluoride-specific ion channel FluC (124 aa).

A run of 4 helical transmembrane segments spans residues 5-25 (LLVS…AVWF), 32-52 (FAFG…ITLG), 61-81 (LLFV…SAEV), and 94-114 (LAVI…GILV). Na(+) contacts are provided by G69 and T72.

This sequence belongs to the fluoride channel Fluc/FEX (TC 1.A.43) family.

It is found in the cell inner membrane. It carries out the reaction fluoride(in) = fluoride(out). Na(+) is not transported, but it plays an essential structural role and its presence is essential for fluoride channel function. Fluoride-specific ion channel. Important for reducing fluoride concentration in the cell, thus reducing its toxicity. This chain is Fluoride-specific ion channel FluC, found in Haemophilus ducreyi (strain 35000HP / ATCC 700724).